We begin with the raw amino-acid sequence, 245 residues long: Acetylglutamate kinase (245 aa).

Residues 41–42 (GG), arginine 63, and asparagine 156 each bind substrate.

Belongs to the acetylglutamate kinase family. ArgB subfamily.

The protein localises to the cytoplasm. The catalysed reaction is N-acetyl-L-glutamate + ATP = N-acetyl-L-glutamyl 5-phosphate + ADP. It participates in amino-acid biosynthesis; L-arginine biosynthesis; N(2)-acetyl-L-ornithine from L-glutamate: step 2/4. Functionally, catalyzes the ATP-dependent phosphorylation of N-acetyl-L-glutamate. In Staphylococcus epidermidis (strain ATCC 35984 / DSM 28319 / BCRC 17069 / CCUG 31568 / BM 3577 / RP62A), this protein is Acetylglutamate kinase.